Here is a 154-residue protein sequence, read N- to C-terminus: MLRVIWKHSSRVTRSIELSNISTTNHTRSLRRLSWISPRRFYAQSWDDRQPNDKIDAHIKVQKLMDQINSRPNVLEKLEKVSNIMIEKKLVNLDGTSANEENTMKPWQMIKILMDRDLRHAMKEFKLELEKSGIQLGPEQLAPLMTVLGLEKKK.

A mitochondrion-targeting transit peptide spans 1-42; it reads MLRVIWKHSSRVTRSIELSNISTTNHTRSLRRLSWISPRRFY.

It localises to the mitochondrion. This is an uncharacterized protein from Saccharomyces cerevisiae (strain ATCC 204508 / S288c) (Baker's yeast).